The primary structure comprises 256 residues: Pyridoxine 5'-phosphate synthase (256 aa).

Asparagine 8 and arginine 19 together coordinate 3-amino-2-oxopropyl phosphate. Histidine 44 serves as the catalytic Proton acceptor. 2 residues coordinate 1-deoxy-D-xylulose 5-phosphate: arginine 46 and histidine 51. Glutamate 74 acts as the Proton acceptor in catalysis. 1-deoxy-D-xylulose 5-phosphate is bound at residue threonine 111. Histidine 202 (proton donor) is an active-site residue. 3-amino-2-oxopropyl phosphate is bound by residues aspartate 203 and 225–226 (GH).

The protein belongs to the PNP synthase family. Homooctamer; tetramer of dimers.

The protein resides in the cytoplasm. It carries out the reaction 3-amino-2-oxopropyl phosphate + 1-deoxy-D-xylulose 5-phosphate = pyridoxine 5'-phosphate + phosphate + 2 H2O + H(+). Its pathway is cofactor biosynthesis; pyridoxine 5'-phosphate biosynthesis; pyridoxine 5'-phosphate from D-erythrose 4-phosphate: step 5/5. Its function is as follows. Catalyzes the complicated ring closure reaction between the two acyclic compounds 1-deoxy-D-xylulose-5-phosphate (DXP) and 3-amino-2-oxopropyl phosphate (1-amino-acetone-3-phosphate or AAP) to form pyridoxine 5'-phosphate (PNP) and inorganic phosphate. The polypeptide is Pyridoxine 5'-phosphate synthase (Xanthomonas campestris pv. campestris (strain 8004)).